We begin with the raw amino-acid sequence, 131 residues long: Glycine cleavage system H protein (131 aa).

The region spanning 24 to 106 (TVRVGITDYA…YGEGWLVELQ (83 aa)) is the Lipoyl-binding domain. Lys-65 is modified (N6-lipoyllysine).

This sequence belongs to the GcvH family. In terms of assembly, the glycine cleavage system is composed of four proteins: P, T, L and H. Requires (R)-lipoate as cofactor.

Its function is as follows. The glycine cleavage system catalyzes the degradation of glycine. The H protein shuttles the methylamine group of glycine from the P protein to the T protein. The sequence is that of Glycine cleavage system H protein from Mycolicibacterium vanbaalenii (strain DSM 7251 / JCM 13017 / BCRC 16820 / KCTC 9966 / NRRL B-24157 / PYR-1) (Mycobacterium vanbaalenii).